Consider the following 201-residue polypeptide: LexA repressor (201 aa).

A DNA-binding region (H-T-H motif) is located at residues 28 to 48 (RAEIANQLGFRSANAAEEHLK). Residues Ser118 and Lys155 each act as for autocatalytic cleavage activity in the active site.

Belongs to the peptidase S24 family. Homodimer.

It catalyses the reaction Hydrolysis of Ala-|-Gly bond in repressor LexA.. Functionally, represses a number of genes involved in the response to DNA damage (SOS response), including recA and lexA. In the presence of single-stranded DNA, RecA interacts with LexA causing an autocatalytic cleavage which disrupts the DNA-binding part of LexA, leading to derepression of the SOS regulon and eventually DNA repair. The polypeptide is LexA repressor (Saccharophagus degradans (strain 2-40 / ATCC 43961 / DSM 17024)).